The primary structure comprises 21 residues: Protein YliM (21 aa).

The polypeptide is Protein YliM (Escherichia coli (strain K12)).